We begin with the raw amino-acid sequence, 165 residues long: Cysteine and tyrosine-rich protein 1 (165 aa).

A signal peptide spans Met1–Ala29. The Extracellular segment spans residues Gln30–Thr61. Residues Ala62–Ile82 traverse the membrane as a helical segment. Over Cys83–Asn165 the chain is Cytoplasmic. The disordered stretch occupies residues Asp127–Asn165. Residues Arg153 to Asn165 show a composition bias toward polar residues.

This sequence belongs to the CYYR1 family.

The protein resides in the membrane. In Rattus norvegicus (Rat), this protein is Cysteine and tyrosine-rich protein 1 (Cyyr1).